The sequence spans 301 residues: MASRYVAVGMILSQTVVGVLGSFSVLLHYLSFYCTGCRLRSTDLIVKHLIVANFLALRCKGVPQTMAAFGVRYFLNALGCKLVFYLHRVGRGVSIGTTCLLSVFQVITVSSRKSRWAKLKEKAPKHVGFSVLLCWIVCMLVNIIFPMYVTGKWNYTNITVNEDLGYCSGGGNNKIAQTLRAMLLSFPDVLCLGLMLWVSSSMVCILHRHKQRVQHIDRSNLSPRASPENRATQSILILVSTFVSSYTLSCLFQVCMALLDNPNSLLVNTSALMSVCFPTLSPFVLMSCDPSVYRFCFAWKR.

At 1–5 (MASRY) the chain is on the extracellular side. A helical membrane pass occupies residues 6-26 (VAVGMILSQTVVGVLGSFSVL). Residues 27-48 (LHYLSFYCTGCRLRSTDLIVKH) lie on the Cytoplasmic side of the membrane. A helical membrane pass occupies residues 49-69 (LIVANFLALRCKGVPQTMAAF). The Extracellular segment spans residues 70–88 (GVRYFLNALGCKLVFYLHR). A helical transmembrane segment spans residues 89 to 109 (VGRGVSIGTTCLLSVFQVITV). At 110 to 126 (SSRKSRWAKLKEKAPKH) the chain is on the cytoplasmic side. The helical transmembrane segment at 127 to 147 (VGFSVLLCWIVCMLVNIIFPM) threads the bilayer. The Extracellular portion of the chain corresponds to 148-185 (YVTGKWNYTNITVNEDLGYCSGGGNNKIAQTLRAMLLS). Residues N154 and N157 are each glycosylated (N-linked (GlcNAc...) asparagine). A helical membrane pass occupies residues 186–206 (FPDVLCLGLMLWVSSSMVCIL). Residues 207-234 (HRHKQRVQHIDRSNLSPRASPENRATQS) lie on the Cytoplasmic side of the membrane. A helical transmembrane segment spans residues 235 to 255 (ILILVSTFVSSYTLSCLFQVC). At 256 to 264 (MALLDNPNS) the chain is on the extracellular side. Residues 265 to 285 (LLVNTSALMSVCFPTLSPFVL) traverse the membrane as a helical segment. At 286–301 (MSCDPSVYRFCFAWKR) the chain is on the cytoplasmic side.

This sequence belongs to the G-protein coupled receptor 1 family.

It localises to the cell membrane. Functionally, putative pheromone receptor. The protein is Vomeronasal type-1 receptor 4 (VN1R4) of Homo sapiens (Human).